A 274-amino-acid polypeptide reads, in one-letter code: HTH-type transcriptional regulator GadX (274 aa).

The HTH araC/xylS-type domain occupies 145 to 242; that stretch reads TRVCTVINNN…GMTPTEYQER (98 aa). 2 consecutive DNA-binding regions (H-T-H motif) follow at residues 162-183 and 209-232; these read ARIASELLMSPSLLKKKLREEE and IKRVAVSCGYHSVSYFIYVFRNYY.

In terms of assembly, homodimer.

Positively regulates the expression of about fifteen genes involved in acid resistance such as gadA, gadB and gadC. Depending on the conditions (growth phase and medium), can repress gadW. The protein is HTH-type transcriptional regulator GadX (gadX) of Shigella flexneri.